The primary structure comprises 282 residues: NAD-dependent protein deacetylase 1 (282 aa).

Residues 1–282 form the Deacetylase sirtuin-type domain; it reads MTVGRAESPE…ADELSPLPTH (282 aa). NAD(+) contacts are provided by residues 25 to 45 and 101 to 104; these read GAGI…SPPS and QNVD. His119 functions as the Proton acceptor in the catalytic mechanism. The Zn(2+) site is built by Cys127, Cys130, Cys181, and Cys184. NAD(+) contacts are provided by residues 221-223, 247-249, and Cys265; these read GSS and NRG.

The protein belongs to the sirtuin family. Class II subfamily. The cofactor is Zn(2+).

It localises to the cytoplasm. It carries out the reaction N(6)-acetyl-L-lysyl-[protein] + NAD(+) + H2O = 2''-O-acetyl-ADP-D-ribose + nicotinamide + L-lysyl-[protein]. NAD-dependent protein deacetylase which modulates the activities of several enzymes which are inactive in their acetylated form. This is NAD-dependent protein deacetylase 1 from Mycobacterium avium (strain 104).